We begin with the raw amino-acid sequence, 136 residues long: Group 1 truncated hemoglobin GlbN (136 aa).

Histidine 81 serves as a coordination point for heme.

The protein belongs to the truncated hemoglobin family. Group I subfamily. In terms of assembly, homodimer. It depends on heme as a cofactor.

In terms of biological role, binds oxygen cooperatively with very high affinity (P(50) = 0.013 mmHg at 20 degrees Celsius) because of a fast combination (25 microM(-1)sec(-1)) and a slow dissociation (0.2 sec(-1)) rate. This is Group 1 truncated hemoglobin GlbN (glbN) from Mycobacterium bovis (strain ATCC BAA-935 / AF2122/97).